Here is a 301-residue protein sequence, read N- to C-terminus: Glycine--tRNA ligase alpha subunit (301 aa).

The protein belongs to the class-II aminoacyl-tRNA synthetase family. In terms of assembly, tetramer of two alpha and two beta subunits.

The protein localises to the cytoplasm. The enzyme catalyses tRNA(Gly) + glycine + ATP = glycyl-tRNA(Gly) + AMP + diphosphate. In Proteus mirabilis (strain HI4320), this protein is Glycine--tRNA ligase alpha subunit.